A 140-amino-acid polypeptide reads, in one-letter code: ATP synthase epsilon chain (140 aa).

The protein belongs to the ATPase epsilon chain family. As to quaternary structure, F-type ATPases have 2 components, CF(1) - the catalytic core - and CF(0) - the membrane proton channel. CF(1) has five subunits: alpha(3), beta(3), gamma(1), delta(1), epsilon(1). CF(0) has three main subunits: a, b and c.

It is found in the cell inner membrane. Produces ATP from ADP in the presence of a proton gradient across the membrane. The sequence is that of ATP synthase epsilon chain from Alkalilimnicola ehrlichii (strain ATCC BAA-1101 / DSM 17681 / MLHE-1).